The chain runs to 212 residues: Ras-related protein Rab-2A (212 aa).

N-acetylalanine is present on Ala-2. A required for interaction with PRKCI region spans residues 2–19 (AYAYLFKYIIIGDTGVGK). Positions 16, 17, 18, 19, 20, 21, and 38 each coordinate GTP. Ser-20 lines the Mg(2+) pocket. The Switch 1 motif lies at 37-42 (LTIGVE). The Mg(2+) site is built by Thr-38 and Asp-61. Residues 63–72 (AGQESFRSIT) carry the Switch 2 motif. GTP is bound by residues Gly-64, Asn-119, Lys-120, Asp-122, Ala-150, and Lys-151. 2 S-geranylgeranyl cysteine lipidation sites follow: Cys-211 and Cys-212.

This sequence belongs to the small GTPase superfamily. Rab family. Interacts with PRKCI. Interacts with TRIP11. Interacts (in GTP-bound form) with GARIN1B. Interacts (GTP-bound) with HOPS complex component VPS39; interaction contributes to obtaining a functional HOPS complex that promotes autophagosome-lysosome membrane fusion driven by STX17-SNAP29-VAMP8. May interact with VPS41. It depends on Mg(2+) as a cofactor. In terms of processing, prenylated. Prenylation is required for association with cellular membranes. In terms of tissue distribution, brain and parietal cells.

Its subcellular location is the endoplasmic reticulum-Golgi intermediate compartment membrane. The protein resides in the melanosome. The protein localises to the endoplasmic reticulum membrane. It is found in the golgi apparatus membrane. It localises to the cytoplasmic vesicle. Its subcellular location is the secretory vesicle. The protein resides in the acrosome. The protein localises to the autophagosome membrane. The catalysed reaction is GTP + H2O = GDP + phosphate + H(+). Its activity is regulated as follows. Regulated by guanine nucleotide exchange factors (GEFs) which promote the exchange of bound GDP for free GTP, GTPase activating proteins (GAPs) which increase the GTP hydrolysis activity, and GDP dissociation inhibitors (GDIs) which inhibit the dissociation of the nucleotide from the GTPase. The small GTPases Rab are key regulators of intracellular membrane trafficking, from the formation of transport vesicles to their fusion with membranes. Rabs cycle between active GTP-bound and inactive GDP-bound states. In their active state, drive transport of vesicular carriers from donor organelles to acceptor organelles to regulate the membrane traffic that maintains organelle identity and morphology. RAB2A regulates autophagy by promoting autophagosome-lysosome fusion via recruitment of the HOPS endosomal tethering complex; this process involves autophagosomal RAB2A and lysosomal RAB39A recruitment of HOPS subcomplexes VPS39-VPS11 and VPS41-VPS16-VPS18-VPS33A, respectively, which assemble into a functional complex to mediate membrane tethering and SNAREs-driven membrane fusion. Required for protein transport from the endoplasmic reticulum to the Golgi complex. Regulates the compacted morphology of the Golgi. Together with RAB2B, redundantly required for efficient autophagic flux. This Oryctolagus cuniculus (Rabbit) protein is Ras-related protein Rab-2A (RAB2A).